A 104-amino-acid chain; its full sequence is Large ribosomal subunit protein uL24 (104 aa).

This sequence belongs to the universal ribosomal protein uL24 family. As to quaternary structure, part of the 50S ribosomal subunit.

Its function is as follows. One of two assembly initiator proteins, it binds directly to the 5'-end of the 23S rRNA, where it nucleates assembly of the 50S subunit. In terms of biological role, one of the proteins that surrounds the polypeptide exit tunnel on the outside of the subunit. This Shewanella pealeana (strain ATCC 700345 / ANG-SQ1) protein is Large ribosomal subunit protein uL24.